The chain runs to 91 residues: Alpha-latrotoxin associated low molecular weight protein SGV150-311 (91 aa).

Positions 1-18 (MNVLHFLILLMSVVSVFC) are cleaved as a signal peptide.

This sequence belongs to the arthropod CHH/MIH/GIH/VIH hormone family. In terms of tissue distribution, expressed by the venom gland.

The protein localises to the secreted. May increase the toxicity of alpha-latrotoxin and/or other venom components. Is non-toxic to mice and to the cockroach Periplaneta americana. This is Alpha-latrotoxin associated low molecular weight protein SGV150-311 from Steatoda grossa (False black widow).